Here is a 441-residue protein sequence, read N- to C-terminus: MPRVEVGLVIHSRMHARAPVDVWRSVRSLPDFWRLLQVRVASQFGDGLFQAGLAGALLFNPDRAADPMAIAGAFAVLFLPYSLLGPFAGALMDRWDRRWVLVGANTGRLALIAGVGTILAVGAGDVPLLVGALVANGLARFVASGLSAALPHVVPREQVVTMNSVAIASGAVSAFLGANFMLLPRWLLGSGDEGASAIVFLVAIPVSIALLWSLRFGPRVLGPDDTERAIHGSAVYAVVTGWLHGARTVVQLPTVAAGLSGLAAHRMVVGINSLLILLLVRHVTARAVGGLGTALLFFAATGLGAFLANVLTPTAIRRWGRYATANGALAAAATIQVAAAGLLVPVMVVCGFLLGVAGQVVKLCADSAMQMDVDDALRGHVFAVQDALFWVSYILSITVAAALIPEHGHAPVFVLFGSAIYLAGLVVHTIVGRRGQPVIGR.

11 helical membrane passes run 68 to 88 (MAIA…GPFA), 110 to 130 (ALIA…PLLV), 131 to 151 (GALV…AALP), 164 to 184 (SVAI…MLLP), 194 to 214 (GASA…LWSL), 229 to 246 (AIHG…LHGA), 260 to 280 (SGLA…LLLV), 287 to 307 (AVGG…GAFL), 337 to 357 (VAAA…LGVA), 384 to 404 (VQDA…AALI), and 412 to 432 (VFVL…TIVG).

Belongs to the major facilitator superfamily.

It is found in the cell membrane. This is an uncharacterized protein from Mycobacterium tuberculosis (strain ATCC 25618 / H37Rv).